A 428-amino-acid chain; its full sequence is C4-dicarboxylate transport protein (428 aa).

Transmembrane regions (helical) follow at residues 8-28, 44-64, 76-96, 142-162, 184-204, 222-242, 289-309, 326-346, and 352-372; these read SLYF…HFYP, LIKM…IAGM, VALL…LVIV, IGAF…LFGF, VIFG…FGAM, LIVC…GSIA, VVGL…SIYL, IFHQ…AAGV, and IVLA…LALI.

The protein belongs to the dicarboxylate/amino acid:cation symporter (DAACS) (TC 2.A.23) family.

It localises to the cell inner membrane. Responsible for the transport of dicarboxylates such as succinate, fumarate, and malate from the periplasm across the membrane. The polypeptide is C4-dicarboxylate transport protein (Cronobacter sakazakii (strain ATCC BAA-894) (Enterobacter sakazakii)).